A 216-amino-acid polypeptide reads, in one-letter code: Pyridoxine/pyridoxamine 5'-phosphate oxidase (216 aa).

FMN-binding positions include 64 to 69 (RVVLLK), 79 to 80 (FT), Lys85, Lys86, and Gln108. Substrate is bound at residue Lys69. Residues Tyr126, Arg130, and Ser134 each coordinate substrate. FMN-binding positions include 143-144 (QS) and Trp188. 194 to 196 (RKH) contacts substrate. An FMN-binding site is contributed by Arg198.

It belongs to the pyridoxamine 5'-phosphate oxidase family. In terms of assembly, homodimer. FMN is required as a cofactor.

The catalysed reaction is pyridoxamine 5'-phosphate + O2 + H2O = pyridoxal 5'-phosphate + H2O2 + NH4(+). It catalyses the reaction pyridoxine 5'-phosphate + O2 = pyridoxal 5'-phosphate + H2O2. It participates in cofactor metabolism; pyridoxal 5'-phosphate salvage; pyridoxal 5'-phosphate from pyridoxamine 5'-phosphate: step 1/1. The protein operates within cofactor metabolism; pyridoxal 5'-phosphate salvage; pyridoxal 5'-phosphate from pyridoxine 5'-phosphate: step 1/1. In terms of biological role, catalyzes the oxidation of either pyridoxine 5'-phosphate (PNP) or pyridoxamine 5'-phosphate (PMP) into pyridoxal 5'-phosphate (PLP). In Wolbachia pipientis wMel, this protein is Pyridoxine/pyridoxamine 5'-phosphate oxidase.